A 230-amino-acid chain; its full sequence is Ribonuclease 3 (230 aa).

An RNase III domain is found at 8–135; it reads IVELKEKLGI…LIGAVYLQTN (128 aa). Residue E48 coordinates Mg(2+). D52 is a catalytic residue. Residues D121 and E124 each contribute to the Mg(2+) site. Residue E124 is part of the active site. The region spanning 161–230 is the DRBM domain; that stretch reads DYKTMIQELV…AHFAFQKLSK (70 aa).

Belongs to the ribonuclease III family. In terms of assembly, homodimer. Mg(2+) is required as a cofactor.

It is found in the cytoplasm. The catalysed reaction is Endonucleolytic cleavage to 5'-phosphomonoester.. In terms of biological role, digests double-stranded RNA. Involved in the processing of primary rRNA transcript to yield the immediate precursors to the large and small rRNAs (23S and 16S). Processes some mRNAs, and tRNAs when they are encoded in the rRNA operon. Processes pre-crRNA and tracrRNA of type II CRISPR loci if present in the organism. The sequence is that of Ribonuclease 3 from Natranaerobius thermophilus (strain ATCC BAA-1301 / DSM 18059 / JW/NM-WN-LF).